The primary structure comprises 174 residues: RNA pyrophosphohydrolase (174 aa).

The Nudix hydrolase domain maps to Gly6–Ser149. The Nudix box motif lies at Gly38–Gly59.

This sequence belongs to the Nudix hydrolase family. RppH subfamily. A divalent metal cation serves as cofactor.

In terms of biological role, accelerates the degradation of transcripts by removing pyrophosphate from the 5'-end of triphosphorylated RNA, leading to a more labile monophosphorylated state that can stimulate subsequent ribonuclease cleavage. This chain is RNA pyrophosphohydrolase, found in Chromobacterium violaceum (strain ATCC 12472 / DSM 30191 / JCM 1249 / CCUG 213 / NBRC 12614 / NCIMB 9131 / NCTC 9757 / MK).